The sequence spans 845 residues: Synaptonemal complex protein 1 (845 aa).

Positions 59 to 215 (ETRQVYVDLN…YQLTEEKEAQ (157 aa)) are interaction with SYCE3. 2 coiled-coil regions span residues 64 to 211 (YVDL…LTEE) and 244 to 544 (LRTE…EIEV). The tract at residues 550 to 644 (EKLLGEVEKA…VSLKKQLEIE (95 aa)) is required for pH-induced assembly of C-terminal ends into antiparallel tetramers. The short motif at 553–556 (LGEV) is the Nuclear localization signal element. Residues 620–663 (KTALETELSNIRNELVSLKKQLEIEREEKEKLKLEKENTAILKD) adopt a coiled-coil conformation. A DNA-binding region spans residues 657–845 (NTAILKDKKD…RLKEAEKLFA (189 aa)). Ser-676 is modified (phosphoserine). A compositionally biased stretch (polar residues) spans 684–703 (FDSKTTPSQNISRISSSMES). Residues 684–709 (FDSKTTPSQNISRISSSMESGKTKDN) are disordered. The Nuclear localization signal motif lies at 753-756 (KKRK). A disordered region spans residues 786 to 808 (LYNNNSPNSHLTPKQTPLSLSTP).

Structural component of synaptonemal complexes. Homotetramer that consists of an N-terminal four-helical bundle that bifurcates into two elongated C-terminal dimeric coiled coils. This tetrameric building block potentially self-assembles into a supramolecular zipper-like lattice to mediate meiotic chromosome synapsis. Self-assembly is likely initiated by local proton density at chromosome axis, which is predicted to trigger antiparallel back to back assembly of adjacent C-terminal ends into tetrameric structures that anchor to chromosomal DNA. Then the N-terminal ends are predicted to undergo cooperative antiparallel head to head assembly at the midline of synaptonemal complexes central element to form a zipper-like lattice between properly aligned homologous chromosomes. The nascent synapsis generated by SYCP1 is stabilized through interaction with central element proteins SYCE1 and SYCE2. Interacts (via tetrameric core) with SYCE3; the interaction remodels SYCP1 homotetramers to 2:1 heterotrimers with SYCE3. SYCP1/SYCE3 heterotrimers form lattice assemblies as part of the mature synaptonemal complex via both lateral and head-to-head interactions. Forms a complex with EWSR1, PRDM9, SYCP3 and REC8; complex formation is dependent of phosphorylated form of REC8 and requires PRDM9 bound to hotspot DNA; EWSR1 joins PRDM9 with the chromosomal axis through REC8. Interacts with SPO16.

It is found in the nucleus. The protein resides in the chromosome. Its subcellular location is the centromere. Functionally, major component of the transverse filaments of synaptonemal complexes, formed between homologous chromosomes during meiotic prophase. Required for normal assembly of the central element of the synaptonemal complexes. Required for normal centromere pairing during meiosis. Required for normal meiotic chromosome synapsis during oocyte and spermatocyte development and for normal male and female fertility. In Mesocricetus auratus (Golden hamster), this protein is Synaptonemal complex protein 1.